The sequence spans 257 residues: 3-methyl-2-oxobutanoate hydroxymethyltransferase (257 aa).

Residues aspartate 42 and aspartate 86 each contribute to the Mg(2+) site. 3-methyl-2-oxobutanoate is bound by residues 42 to 43 (DS), aspartate 86, and lysine 116. Position 118 (glutamate 118) interacts with Mg(2+). Glutamate 185 serves as the catalytic Proton acceptor.

This sequence belongs to the PanB family. In terms of assembly, homodecamer; pentamer of dimers. Requires Mg(2+) as cofactor.

The protein resides in the cytoplasm. It carries out the reaction 3-methyl-2-oxobutanoate + (6R)-5,10-methylene-5,6,7,8-tetrahydrofolate + H2O = 2-dehydropantoate + (6S)-5,6,7,8-tetrahydrofolate. The protein operates within cofactor biosynthesis; (R)-pantothenate biosynthesis; (R)-pantoate from 3-methyl-2-oxobutanoate: step 1/2. In terms of biological role, catalyzes the reversible reaction in which hydroxymethyl group from 5,10-methylenetetrahydrofolate is transferred onto alpha-ketoisovalerate to form ketopantoate. This Prochlorococcus marinus (strain MIT 9515) protein is 3-methyl-2-oxobutanoate hydroxymethyltransferase.